The sequence spans 276 residues: ATP synthase subunit a (276 aa).

6 consecutive transmembrane segments (helical) span residues 47-67 (WHID…WLFY), 107-127 (IAPL…MDLI), 152-172 (DLNV…FYSI), 188-208 (PFNH…TLVA), 226-246 (LIFI…SVPW), and 247-267 (AIFH…LTIV).

This sequence belongs to the ATPase A chain family. As to quaternary structure, F-type ATPases have 2 components, CF(1) - the catalytic core - and CF(0) - the membrane proton channel. CF(1) has five subunits: alpha(3), beta(3), gamma(1), delta(1), epsilon(1). CF(0) has three main subunits: a(1), b(2) and c(9-12). The alpha and beta chains form an alternating ring which encloses part of the gamma chain. CF(1) is attached to CF(0) by a central stalk formed by the gamma and epsilon chains, while a peripheral stalk is formed by the delta and b chains.

Its subcellular location is the cell inner membrane. Functionally, key component of the proton channel; it plays a direct role in the translocation of protons across the membrane. This is ATP synthase subunit a from Shewanella pealeana (strain ATCC 700345 / ANG-SQ1).